The sequence spans 382 residues: 1-deoxy-D-xylulose 5-phosphate reductoisomerase (382 aa).

NADPH-binding residues include Thr-10, Gly-11, Ser-12, Ile-13, Gly-36, and Asn-122. Lys-123 serves as a coordination point for 1-deoxy-D-xylulose 5-phosphate. Glu-124 provides a ligand contact to NADPH. Asp-148 is a binding site for Mn(2+). 4 residues coordinate 1-deoxy-D-xylulose 5-phosphate: Ser-149, Glu-150, Ser-174, and His-197. Glu-150 is a binding site for Mn(2+). NADPH is bound at residue Gly-203. Ser-210, Asn-215, Lys-216, and Glu-219 together coordinate 1-deoxy-D-xylulose 5-phosphate. Glu-219 lines the Mn(2+) pocket.

It belongs to the DXR family. Mg(2+) is required as a cofactor. It depends on Mn(2+) as a cofactor.

The enzyme catalyses 2-C-methyl-D-erythritol 4-phosphate + NADP(+) = 1-deoxy-D-xylulose 5-phosphate + NADPH + H(+). It participates in isoprenoid biosynthesis; isopentenyl diphosphate biosynthesis via DXP pathway; isopentenyl diphosphate from 1-deoxy-D-xylulose 5-phosphate: step 1/6. Functionally, catalyzes the NADPH-dependent rearrangement and reduction of 1-deoxy-D-xylulose-5-phosphate (DXP) to 2-C-methyl-D-erythritol 4-phosphate (MEP). This is 1-deoxy-D-xylulose 5-phosphate reductoisomerase from Chlorobium chlorochromatii (strain CaD3).